We begin with the raw amino-acid sequence, 115 residues long: Peptidyl-tRNA hydrolase (115 aa).

The protein belongs to the PTH2 family.

The protein localises to the cytoplasm. The enzyme catalyses an N-acyl-L-alpha-aminoacyl-tRNA + H2O = an N-acyl-L-amino acid + a tRNA + H(+). Functionally, the natural substrate for this enzyme may be peptidyl-tRNAs which drop off the ribosome during protein synthesis. The protein is Peptidyl-tRNA hydrolase (pth) of Nanoarchaeum equitans (strain Kin4-M).